Consider the following 287-residue polypeptide: DegV domain-containing protein DR_0500 (287 aa).

The 274-residue stretch at 7 to 280 (FAVVTDGGLD…PRALGVAAAP (274 aa)) folds into the DegV domain. Hexadecanoate-binding residues include Ser-62 and Ser-93.

May bind long-chain fatty acids, such as palmitate, and may play a role in lipid transport or fatty acid metabolism. This is DegV domain-containing protein DR_0500 from Deinococcus radiodurans (strain ATCC 13939 / DSM 20539 / JCM 16871 / CCUG 27074 / LMG 4051 / NBRC 15346 / NCIMB 9279 / VKM B-1422 / R1).